The chain runs to 258 residues: MAVGKNKRLTKGKKGQKKKIIDPFTKKDWYDVKAPSQFAVRNIGKTLVNRTSGTKIASDGLKGRVFEVSLADLQNGEIAFRKFRLIAEEVLGKSVLTNFHGMSMTSDKLKSLVKKWQTLIEAHIDAKTTDGYLLRFFAIGFTKKRPNQIKKTAYAKTSQCRSIRKKMTDIITREVSAIDLKEVVNRLIPDSIGKDIEKSCQSIYPLHDVYIRKVKVLKKPKLDTAKLLELHGEGVASSGDAGSAVRRDGYEPPVQESV.

A disordered region spans residues 235–258; it reads VASSGDAGSAVRRDGYEPPVQESV.

It belongs to the eukaryotic ribosomal protein eS1 family. As to quaternary structure, component of the small ribosomal subunit. Mature ribosomes consist of a small (40S) and a large (60S) subunit. The 40S subunit contains about 33 different proteins and 1 molecule of RNA (18S). The 60S subunit contains about 49 different proteins and 3 molecules of RNA (28S, 5.8S and 5S).

The protein localises to the cytoplasm. This is Small ribosomal subunit protein eS1 from Trichoplax adhaerens (Trichoplax reptans).